The following is a 705-amino-acid chain: Elongation factor G (705 aa).

Positions 8–291 (EKVRNIGIMA…AVVEYLPSPI (284 aa)) constitute a tr-type G domain. GTP-binding positions include 17 to 24 (AHIDAGKT), 90 to 94 (DTPGH), and 144 to 147 (NKMD).

Belongs to the TRAFAC class translation factor GTPase superfamily. Classic translation factor GTPase family. EF-G/EF-2 subfamily.

The protein resides in the cytoplasm. Catalyzes the GTP-dependent ribosomal translocation step during translation elongation. During this step, the ribosome changes from the pre-translocational (PRE) to the post-translocational (POST) state as the newly formed A-site-bound peptidyl-tRNA and P-site-bound deacylated tRNA move to the P and E sites, respectively. Catalyzes the coordinated movement of the two tRNA molecules, the mRNA and conformational changes in the ribosome. The sequence is that of Elongation factor G from Chloroherpeton thalassium (strain ATCC 35110 / GB-78).